Consider the following 297-residue polypeptide: tRNA dimethylallyltransferase (297 aa).

15–22 (GPTASGKS) is an ATP binding site. 17-22 (TASGKS) serves as a coordination point for substrate. 2 interaction with substrate tRNA regions span residues 40–43 (DSMQ) and 164–168 (QRIVR).

It belongs to the IPP transferase family. In terms of assembly, monomer. Mg(2+) is required as a cofactor.

It carries out the reaction adenosine(37) in tRNA + dimethylallyl diphosphate = N(6)-dimethylallyladenosine(37) in tRNA + diphosphate. Catalyzes the transfer of a dimethylallyl group onto the adenine at position 37 in tRNAs that read codons beginning with uridine, leading to the formation of N6-(dimethylallyl)adenosine (i(6)A). In Rhizobium leguminosarum bv. trifolii (strain WSM2304), this protein is tRNA dimethylallyltransferase.